The following is a 569-amino-acid chain: Beta-galactoside-specific lectin 3 (569 aa).

The signal sequence occupies residues methionine 1–serine 33. Glutamate 198 is an active-site residue. Intrachain disulfides connect cysteine 280–cysteine 311, cysteine 327–cysteine 346, and cysteine 370–cysteine 387. The propeptide at glutamate 288 to aspartate 307 is connecting peptide. A Ricin B-type lectin 1 domain is found at serine 314–glycine 441. D-galactose is bound at residue aspartate 329–arginine 331. Residues asparagine 402 and asparagine 442 are each glycosylated (N-linked (GlcNAc...) asparagine). One can recognise a Ricin B-type lectin 2 domain in the interval alanine 445–valine 568. Cystine bridges form between cysteine 458–cysteine 471 and cysteine 497–cysteine 514. Residue aspartate 541–alanine 543 participates in D-galactose binding.

Belongs to the ribosome-inactivating protein family. Type 2 RIP subfamily. As to quaternary structure, disulfide-linked dimer of A and B chains.

It catalyses the reaction Endohydrolysis of the N-glycosidic bond at one specific adenosine on the 28S rRNA.. Functionally, the A chain is responsible for inhibiting protein synthesis through the catalytic inactivation of 60S ribosomal subunits by removing adenine from position 4,324 of 28S rRNA. The B chain binds to cell receptors and probably facilitates the entry into the cell of the A chain; B chains are also responsible for cell agglutination (lectin activity). Inhibits growth of the human tumor cell line Molt4. The protein is Beta-galactoside-specific lectin 3 of Viscum album (European mistletoe).